A 655-amino-acid polypeptide reads, in one-letter code: Proprotein convertase subtilisin/kexin type 4 (655 aa).

Residues 1–26 (MRPSQTELWLGLTLTLALLAVRWASA) form the signal peptide. Residues 27-110 (QAPIYVSSWA…QQTLRRRVKR (84 aa)) constitute a propeptide that is removed on maturation. One can recognise a Peptidase S8 domain in the interval 123–437 (QWYMNKEIQQ…YGLLDAGLLV (315 aa)). Residues D155, H196, and S370 each act as charge relay system in the active site. The P/Homo B domain occupies 446-580 (TKPQKKCAIR…TLLLYGTAED (135 aa)). Residue N472 is glycosylated (N-linked (GlcNAc...) asparagine).

Belongs to the peptidase S8 family. Furin subfamily. The proPCSK4 form interacts with HSPA5; the interaction takes place at the endoplasmic reticulum. N-glycosylated. Post-translationally, synthesized in the endoplasmic reticulum as a zymogen, is matured by autocatalytic cleavage between the prodomain and the catalytic domain. As to expression, expressed abundantly in the testis since postnatal Day 16. In testis, strongly detected in round and elongated spermatids as well as spermatocytes. Also observed in residual bodies engulfed by Sertoli cells at spermatogenic stages VIII and IX. In ovaries, expressed in macrophage-like cells of the ovarian theca, interstitium and corpora lutea.

Its subcellular location is the cytoplasmic vesicle. The protein resides in the secretory vesicle. It localises to the acrosome membrane. In terms of biological role, proprotein convertase involved in the processing of hormone and other protein precursors at sites comprised of pairs of basic amino acid residues. In males, important for ADAM2 processing as well as other acrosomal proteins with roles in fertilization and critical for normal fertilization events such as sperm capacitation, acrosome reaction and binding of sperm to zona pellucida. Also plays a role in female fertility, involved in the regulation of trophoblast migration and placental development, may be through the proteolytical processing and activation of proteins such as IGF2. May also participate in folliculogenesis in the ovaries. This Mus musculus (Mouse) protein is Proprotein convertase subtilisin/kexin type 4 (Pcsk4).